The following is a 37-amino-acid chain: Large ribosomal subunit protein bL36 (37 aa).

The protein belongs to the bacterial ribosomal protein bL36 family.

This chain is Large ribosomal subunit protein bL36, found in Mycoplasma genitalium (strain ATCC 33530 / DSM 19775 / NCTC 10195 / G37) (Mycoplasmoides genitalium).